A 289-amino-acid polypeptide reads, in one-letter code: Lipoyl synthase 1 (289 aa).

Residues Cys-33, Cys-38, Cys-44, Cys-59, Cys-63, Cys-66, and Ser-274 each coordinate [4Fe-4S] cluster. The 219-residue stretch at 45–263 (FAGGTATFLI…RIGEEELGFL (219 aa)) folds into the Radical SAM core domain.

The protein belongs to the radical SAM superfamily. Lipoyl synthase family. [4Fe-4S] cluster is required as a cofactor.

Its subcellular location is the cytoplasm. The catalysed reaction is [[Fe-S] cluster scaffold protein carrying a second [4Fe-4S](2+) cluster] + N(6)-octanoyl-L-lysyl-[protein] + 2 oxidized [2Fe-2S]-[ferredoxin] + 2 S-adenosyl-L-methionine + 4 H(+) = [[Fe-S] cluster scaffold protein] + N(6)-[(R)-dihydrolipoyl]-L-lysyl-[protein] + 4 Fe(3+) + 2 hydrogen sulfide + 2 5'-deoxyadenosine + 2 L-methionine + 2 reduced [2Fe-2S]-[ferredoxin]. The protein operates within protein modification; protein lipoylation via endogenous pathway; protein N(6)-(lipoyl)lysine from octanoyl-[acyl-carrier-protein]: step 2/2. Catalyzes the radical-mediated insertion of two sulfur atoms into the C-6 and C-8 positions of the octanoyl moiety bound to the lipoyl domains of lipoate-dependent enzymes, thereby converting the octanoylated domains into lipoylated derivatives. The polypeptide is Lipoyl synthase 1 (Parasynechococcus marenigrum (strain WH8102)).